The chain runs to 231 residues: NADH-ubiquinone oxidoreductase chain 4 (231 aa).

7 helical membrane-spanning segments follow: residues 1–21, 34–54, 63–85, 89–111, 128–148, 156–176, and 211–231; these read PIAG…YGII, MFLP…LTCL, IAYS…TPWG, AMAL…NTTY, ILPM…AIPP, LLIM…LGLS, and LLMI…ELII.

Belongs to the complex I subunit 4 family.

Its subcellular location is the mitochondrion membrane. It carries out the reaction a ubiquinone + NADH + 5 H(+)(in) = a ubiquinol + NAD(+) + 4 H(+)(out). In terms of biological role, core subunit of the mitochondrial membrane respiratory chain NADH dehydrogenase (Complex I) that is believed to belong to the minimal assembly required for catalysis. Complex I functions in the transfer of electrons from NADH to the respiratory chain. The immediate electron acceptor for the enzyme is believed to be ubiquinone. This Agkistrodon piscivorus piscivorus (Eastern cottonmouth) protein is NADH-ubiquinone oxidoreductase chain 4 (MT-ND4).